Consider the following 128-residue polypeptide: Ribonuclease P protein component (128 aa).

The protein belongs to the RnpA family. In terms of assembly, consists of a catalytic RNA component (M1 or rnpB) and a protein subunit.

It catalyses the reaction Endonucleolytic cleavage of RNA, removing 5'-extranucleotides from tRNA precursor.. In terms of biological role, RNaseP catalyzes the removal of the 5'-leader sequence from pre-tRNA to produce the mature 5'-terminus. It can also cleave other RNA substrates such as 4.5S RNA. The protein component plays an auxiliary but essential role in vivo by binding to the 5'-leader sequence and broadening the substrate specificity of the ribozyme. This chain is Ribonuclease P protein component, found in Prochlorococcus marinus (strain MIT 9312).